The primary structure comprises 1115 residues: Serine/threonine-protein kinase/endoribonuclease IRE1 (1115 aa).

Positions 1–18 (MRLLRRNMLVLTLLVCVF) are cleaved as a signal peptide. At 19 to 526 (SSIISCSIPL…RELDEKNQNS (508 aa)) the chain is on the lumenal side. Asn-111, Asn-213, Asn-298, and Asn-397 each carry an N-linked (GlcNAc...) asparagine glycan. A helical membrane pass occupies residues 527–555 (LLLKFGSLVYRIIETGVFLLLFLIFCAIL). Residues 556–1115 (QRFKILPPLY…DQILREFLYS (560 aa)) lie on the Cytoplasmic side of the membrane. The interval 617–658 (GSLKSEKDNDDADEDDEKSLDLTTEKKKRKRGSRGGKKGRKS) is disordered. The span at 624–634 (DNDDADEDDEK) shows a compositional bias: acidic residues. Residues 642 to 658 (KKKRKRGSRGGKKGRKS) are compositionally biased toward basic residues. The Protein kinase domain occupies 674 to 980 (VVSEKILGYG…AMKVLRHPLF (307 aa)). ADP contacts are provided by Ser-684, Lys-702, Glu-746, Cys-748, and Asn-751. The Proton acceptor role is filled by Asp-797. Mg(2+) contacts are provided by Asn-802 and Asp-828. Ser-840 and Ser-841 each carry phosphoserine; by autocatalysis. Thr-844 carries the phosphothreonine; by autocatalysis modification. The region spanning 983-1115 (KSKKLEFLLK…DQILREFLYS (133 aa)) is the KEN domain.

This sequence belongs to the protein kinase superfamily. Ser/Thr protein kinase family. In terms of assembly, homodimer; in response to the accumulation of unfolded proteins. Dimerization of lumenal domains help position the cytoplasmic kinase domains optimally for autophosphorylation to initiate the unfolded protein response. Dimerization of the kinase domain is important for ribonuclease activity. Interacts (when phosphorylated) with PTC2; the interaction is direct and serves to attenuate the endoplasmic reticulum unfolded protein response. Mg(2+) serves as cofactor. Autophosphorylated mainly on serine residues; phosphorylation enables nucleotide binding by the active site.

It localises to the endoplasmic reticulum membrane. The catalysed reaction is L-seryl-[protein] + ATP = O-phospho-L-seryl-[protein] + ADP + H(+). The enzyme catalyses L-threonyl-[protein] + ATP = O-phospho-L-threonyl-[protein] + ADP + H(+). Its activity is regulated as follows. The kinase domain is activated by trans-autophosphorylation. Kinase activity is required for activation of the endoribonuclease domain. Inactivated by dephosphorylation via recruitment of PTC2. Its function is as follows. Senses unfolded proteins in the lumen of the endoplasmic reticulum via its N-terminal domain which leads to enzyme auto-activation. The active endoribonuclease domain splices HAC1 precursor mRNA to produce the mature form which then induces transcription of UPR target genes. This is Serine/threonine-protein kinase/endoribonuclease IRE1 (IRE1) from Saccharomyces cerevisiae (strain ATCC 204508 / S288c) (Baker's yeast).